The sequence spans 545 residues: CTP synthase (545 aa).

The tract at residues 1 to 264 (MQYIVVTGGV…ITRLSKLLNM (264 aa)) is amidoligase domain. Residue Ser12 coordinates CTP. Ser12 is a binding site for UTP. ATP is bound at residue 13-18 (GLGKGT). Residue Tyr53 participates in L-glutamine binding. Asp70 contacts ATP. Mg(2+) is bound by residues Asp70 and Glu140. CTP-binding positions include 147–149 (DIE), 185–190 (KTKPTQ), and Arg221. Residues 185–190 (KTKPTQ) and Arg221 each bind UTP. The Glutamine amidotransferase type-1 domain maps to 294–527 (YVDLHDAYIS…VEQALIFKHR (234 aa)). Gly347 is an L-glutamine binding site. The active-site Nucleophile; for glutamine hydrolysis is Cys374. L-glutamine-binding positions include 375–378 (LGFQ), Glu398, and Arg455. Active-site residues include His500 and Glu502.

It belongs to the CTP synthase family. In terms of assembly, homotetramer.

It catalyses the reaction UTP + L-glutamine + ATP + H2O = CTP + L-glutamate + ADP + phosphate + 2 H(+). It carries out the reaction L-glutamine + H2O = L-glutamate + NH4(+). The catalysed reaction is UTP + NH4(+) + ATP = CTP + ADP + phosphate + 2 H(+). It participates in pyrimidine metabolism; CTP biosynthesis via de novo pathway; CTP from UDP: step 2/2. Allosterically activated by GTP, when glutamine is the substrate; GTP has no effect on the reaction when ammonia is the substrate. The allosteric effector GTP functions by stabilizing the protein conformation that binds the tetrahedral intermediate(s) formed during glutamine hydrolysis. Inhibited by the product CTP, via allosteric rather than competitive inhibition. Catalyzes the ATP-dependent amination of UTP to CTP with either L-glutamine or ammonia as the source of nitrogen. Regulates intracellular CTP levels through interactions with the four ribonucleotide triphosphates. In Thermoplasma acidophilum (strain ATCC 25905 / DSM 1728 / JCM 9062 / NBRC 15155 / AMRC-C165), this protein is CTP synthase.